A 269-amino-acid chain; its full sequence is Aquaporin-1 (269 aa).

Residues 1–11 (MASEIKKKLFW) lie on the Cytoplasmic side of the membrane. The helical transmembrane segment at 12-29 (RAVVAEFLAMTLFVFISI) threads the bilayer. Residues 30 to 46 (GSALGFNYPLERNQTLV) are Extracellular-facing. A helical membrane pass occupies residues 47–65 (QDNVKVSLAFGLSIATLAQ). Over 66–68 (SVG) the chain is Cytoplasmic. An intramembrane segment occupies 69–82 (HISGAHLNPAVTLG). An NPA 1 motif is present at residues 76–78 (NPA). The Cytoplasmic portion of the chain corresponds to 83-90 (LLLSCQIS). The helical transmembrane segment at 91–109 (ILRAVMYIIAQCVGAIVAT) threads the bilayer. Over 110 to 133 (AILSGITSSLVDNSLGRNDLAHGV) the chain is Extracellular. The helical transmembrane segment at 134-153 (NSGQGLGIEIIGTLQLVLCV) threads the bilayer. The Cytoplasmic portion of the chain corresponds to 154-163 (LATTDRRRRD). A helical membrane pass occupies residues 164–181 (LGGSAPLAIGLSVALGHL). Over 182 to 186 (LAIDY) the chain is Extracellular. An intramembrane segment occupies 187 to 199 (TGCGINPARSFGS). An NPA 2 motif is present at residues 192–194 (NPA). Residues 200 to 206 (AVLTRNF) lie on the Extracellular side of the membrane. Residue N205 is glycosylated (N-linked (GlcNAc...) asparagine). Residues 207 to 224 (SNHWIFWVGPFIGGALAV) form a helical membrane-spanning segment. Topologically, residues 225 to 269 (LIYDFILAPRSSDFTDRMKVWTSGQVEEYDLDADDINSRVEMKPK) are cytoplasmic. A Phosphoserine modification is found at S247. Position 253 is a phosphotyrosine (Y253). Position 262 is a phosphoserine (S262).

The protein belongs to the MIP/aquaporin (TC 1.A.8) family. Homotetramer; each monomer provides an independent water pore. Component of the ankyrin-1 complex in the erythrocyte, composed of ANK1, RHCE, RHAG, SLC4A1, EPB42, GYPA, GYPB and AQP1. Interacts with EPHB2; involved in endolymph production in the inner ear. Identified in a complex with STOM. Interacts (via the N-terminal) with ANK1 (via ANK 1-5 repeats). Interacts (via the C-terminal) with EPB42. In terms of tissue distribution, detected in erythrocytes (at protein level). In the kidney, expressed on luminal and basal borders of proximal tubules and in the thin limb of Henle's loop (at protein level).

It localises to the cell membrane. It carries out the reaction H2O(in) = H2O(out). The enzyme catalyses nitric oxide(out) = nitric oxide(in). It catalyses the reaction CO2(out) = CO2(in). The catalysed reaction is glycerol(in) = glycerol(out). It carries out the reaction H2O2(out) = H2O2(in). The enzyme catalyses K(+)(in) = K(+)(out). It catalyses the reaction Na(+)(in) = Na(+)(out). Its function is as follows. Forms a water channel that facilitates the transport of water across cell membranes, playing a crucial role in water homeostasis in various tissues. Could also be permeable to small solutes including hydrogen peroxide, glycerol and gases such as amonnia (NH3), nitric oxide (NO) and carbon dioxide (CO2). Recruited to the ankyrin-1 complex, a multiprotein complex of the erythrocyte membrane, it could be part of a CO2 metabolon, linking facilitated diffusion of CO2 across the membrane, anion exchange of Cl(-)/HCO3(-) and interconversion of dissolved CO2 and carbonic acid in the cytosol. In vitro, it shows non-selective gated cation channel activity and may be permeable to cations like K(+) and Na(+) in vivo. In Mus musculus (Mouse), this protein is Aquaporin-1.